Here is a 326-residue protein sequence, read N- to C-terminus: 4-hydroxy-3-methylbut-2-enyl diphosphate reductase (326 aa).

Position 22 (cysteine 22) interacts with [4Fe-4S] cluster. (2E)-4-hydroxy-3-methylbut-2-enyl diphosphate contacts are provided by histidine 51 and histidine 84. 2 residues coordinate dimethylallyl diphosphate: histidine 51 and histidine 84. 2 residues coordinate isopentenyl diphosphate: histidine 51 and histidine 84. Residue cysteine 106 coordinates [4Fe-4S] cluster. Histidine 134 provides a ligand contact to (2E)-4-hydroxy-3-methylbut-2-enyl diphosphate. Histidine 134 contacts dimethylallyl diphosphate. Histidine 134 provides a ligand contact to isopentenyl diphosphate. The active-site Proton donor is the glutamate 136. Residue threonine 174 coordinates (2E)-4-hydroxy-3-methylbut-2-enyl diphosphate. Cysteine 204 serves as a coordination point for [4Fe-4S] cluster. Positions 232, 233, 234, and 276 each coordinate (2E)-4-hydroxy-3-methylbut-2-enyl diphosphate. Residues serine 232, serine 233, asparagine 234, and serine 276 each contribute to the dimethylallyl diphosphate site. 4 residues coordinate isopentenyl diphosphate: serine 232, serine 233, asparagine 234, and serine 276.

This sequence belongs to the IspH family. [4Fe-4S] cluster serves as cofactor.

The catalysed reaction is isopentenyl diphosphate + 2 oxidized [2Fe-2S]-[ferredoxin] + H2O = (2E)-4-hydroxy-3-methylbut-2-enyl diphosphate + 2 reduced [2Fe-2S]-[ferredoxin] + 2 H(+). It catalyses the reaction dimethylallyl diphosphate + 2 oxidized [2Fe-2S]-[ferredoxin] + H2O = (2E)-4-hydroxy-3-methylbut-2-enyl diphosphate + 2 reduced [2Fe-2S]-[ferredoxin] + 2 H(+). It functions in the pathway isoprenoid biosynthesis; dimethylallyl diphosphate biosynthesis; dimethylallyl diphosphate from (2E)-4-hydroxy-3-methylbutenyl diphosphate: step 1/1. The protein operates within isoprenoid biosynthesis; isopentenyl diphosphate biosynthesis via DXP pathway; isopentenyl diphosphate from 1-deoxy-D-xylulose 5-phosphate: step 6/6. Catalyzes the conversion of 1-hydroxy-2-methyl-2-(E)-butenyl 4-diphosphate (HMBPP) into a mixture of isopentenyl diphosphate (IPP) and dimethylallyl diphosphate (DMAPP). Acts in the terminal step of the DOXP/MEP pathway for isoprenoid precursor biosynthesis. The protein is 4-hydroxy-3-methylbut-2-enyl diphosphate reductase of Bordetella parapertussis (strain 12822 / ATCC BAA-587 / NCTC 13253).